Reading from the N-terminus, the 376-residue chain is Geranylgeranyl transferase type-1 subunit beta (376 aa).

PFTB repeat units follow at residues 128-179 (KRSL…YICG), 192-231 (TEKL…ALLS), 259-301 (MKFE…HLLT), and 310-353 (TELV…ALIE). Residues 216-218 (HSG) and 280-283 (RENK) each bind geranylgeranyl diphosphate. Zn(2+) contacts are provided by aspartate 286 and cysteine 288. 289–292 (YAFW) is a geranylgeranyl diphosphate binding site. Residue histidine 341 coordinates Zn(2+).

The protein belongs to the protein prenyltransferase subunit beta family. As to quaternary structure, heterodimer of an alpha (RAM2) and a beta (CDC43) subunit. It depends on Zn(2+) as a cofactor. Mg(2+) is required as a cofactor.

The protein localises to the cytoplasm. It carries out the reaction geranylgeranyl diphosphate + L-cysteinyl-[protein] = S-geranylgeranyl-L-cysteinyl-[protein] + diphosphate. Its function is as follows. Catalyzes the transfer of a geranyl-geranyl moiety from geranyl-geranyl diphosphate to proteins having the C-terminal sequence Cys-Ile-Ile-Leu or Cys-Val-Leu-Leu. Acts, among other substrates, on Rho1 and Rho2 and CDC42 proteins. Participates in a RAS-like C-terminal modification of proteins involved in nuclear division and bud growth. It is involved in bud positioning and cell polarity. The beta subunit is responsible for isoprenoid and peptide-binding. The chain is Geranylgeranyl transferase type-1 subunit beta (CDC43) from Saccharomyces cerevisiae (strain ATCC 204508 / S288c) (Baker's yeast).